Here is a 159-residue protein sequence, read N- to C-terminus: Cyclic pyranopterin monophosphate synthase (159 aa).

Residues 76–78 (LCH) and 114–115 (ME) contribute to the substrate site. The active site involves D129.

It belongs to the MoaC family. As to quaternary structure, homohexamer; trimer of dimers.

The catalysed reaction is (8S)-3',8-cyclo-7,8-dihydroguanosine 5'-triphosphate = cyclic pyranopterin phosphate + diphosphate. Its pathway is cofactor biosynthesis; molybdopterin biosynthesis. Functionally, catalyzes the conversion of (8S)-3',8-cyclo-7,8-dihydroguanosine 5'-triphosphate to cyclic pyranopterin monophosphate (cPMP). The chain is Cyclic pyranopterin monophosphate synthase from Oleidesulfovibrio alaskensis (strain ATCC BAA-1058 / DSM 17464 / G20) (Desulfovibrio alaskensis).